A 191-amino-acid chain; its full sequence is Protein YceI (191 aa).

Positions 1–22 (MKKNLLGFTLASLLFTTGSAVA) are cleaved as a signal peptide.

Belongs to the UPF0312 family. Type 1 subfamily.

The protein localises to the periplasm. The polypeptide is Protein YceI (Salmonella newport (strain SL254)).